Consider the following 121-residue polypeptide: Phosphoribosyl-ATP pyrophosphatase (121 aa).

The protein belongs to the PRA-PH family.

It is found in the cytoplasm. It catalyses the reaction 1-(5-phospho-beta-D-ribosyl)-ATP + H2O = 1-(5-phospho-beta-D-ribosyl)-5'-AMP + diphosphate + H(+). Its pathway is amino-acid biosynthesis; L-histidine biosynthesis; L-histidine from 5-phospho-alpha-D-ribose 1-diphosphate: step 2/9. This chain is Phosphoribosyl-ATP pyrophosphatase, found in Burkholderia ambifaria (strain MC40-6).